Consider the following 547-residue polypeptide: Cytochrome P450 monooxygenase oblB (547 aa).

A run of 2 helical transmembrane segments spans residues 42 to 62 and 242 to 262; these read GAVGAIYAIYISGLVIYRLFL and FDMFHLGAVSLPLFMGMPWLI. N-linked (GlcNAc...) asparagine glycosylation is present at N277. The chain crosses the membrane as a helical span at residues 345-365; it reads VLIGSGTMTTAGTMGFLCYYI. Residue C489 coordinates heme.

This sequence belongs to the cytochrome P450 family. The cofactor is heme.

It localises to the membrane. The enzyme catalyses ophiobolin F + 4 reduced [NADPH--hemoprotein reductase] + 4 O2 = ophiobolin C + 4 oxidized [NADPH--hemoprotein reductase] + 6 H2O + 4 H(+). It participates in secondary metabolite biosynthesis; terpenoid biosynthesis. Cytochrome P450 monooxygenase; part of the gene cluster that mediates the biosynthesis of the sesterterpenes ophiobolins, fungal phytotoxins with potential anti-cancer activities. The first step of the pathway is performed by the sesterterpene synthase oblA that possesses both prenyl transferase and terpene cyclase activity, converting isopentenyl diphosphate and dimethylallyl diphosphate into geranylfarnesyl diphosphate (GFPP) and further converting GFPP into ophiobolin F, respectively. Other sesterterpenoids (C(25) terpenoids) are found as minor products of oblA. The cytochrome P450 monooxygenase oblB then catalyzes a four-step oxidative transformation of ophiobolin F to yield ophiobolin C. The function of the cytochrome P450 monooxygenase oblE has still to be determined. This chain is Cytochrome P450 monooxygenase oblB, found in Emericella variicolor (Aspergillus stellatus).